Reading from the N-terminus, the 313-residue chain is NADH-ubiquinone oxidoreductase chain 1 (313 aa).

8 consecutive transmembrane segments (helical) span residues 6 to 26 (LLSGVISCVCALLAVAFFTLL), 71 to 91 (VFPFLVCPAMSLFLALVLWIL), 105 to 125 (MLLFLCVSSLGVYSVMGAGWF), 149 to 169 (MSLILMSCLLLVGSMSLSMIM), 173 to 193 (FFVWVAFVNFFMMLMWFVSCV), 220 to 242 (GVGFALLFMAEYGNILFMSVLVI), 255 to 275 (FGMGLCVMVSFVGWLFIWVRA), and 293 to 313 (YLPSVLSILMFLVVSVYILNG).

The protein belongs to the complex I subunit 1 family.

Its subcellular location is the mitochondrion inner membrane. The enzyme catalyses a ubiquinone + NADH + 5 H(+)(in) = a ubiquinol + NAD(+) + 4 H(+)(out). In terms of biological role, core subunit of the mitochondrial membrane respiratory chain NADH dehydrogenase (Complex I) that is believed to belong to the minimal assembly required for catalysis. Complex I functions in the transfer of electrons from NADH to the respiratory chain. The immediate electron acceptor for the enzyme is believed to be ubiquinone. The protein is NADH-ubiquinone oxidoreductase chain 1 (ND1) of Heterololigo bleekeri (Spear squid).